The sequence spans 68 residues: Disintegrin EMF10B (68 aa).

A Disintegrin domain is found at 1–68 (ELLQNSGNPC…SDCPRNPVFK (68 aa)). Disulfide bonds link cysteine 10-cysteine 33, cysteine 24-cysteine 30, cysteine 29-cysteine 54, and cysteine 42-cysteine 61. Positions 46 to 48 (MGD) match the Cell attachment site; atypical (MGD) motif.

It belongs to the venom metalloproteinase (M12B) family. P-II subfamily. P-IIe sub-subfamily. Heterodimer with EMF10A; disulfide-linked. In terms of tissue distribution, expressed by the venom gland.

The protein localises to the secreted. Functionally, extremely potent and selective inhibitor of integrin alpha-5/beta-1 (ITGA5/ITGB1). Partially inhibits adhesion of cells expressing alpha-IIb/beta-3 (ITGA2B/ITGB3), alpha-V/beta-3 (ITGAV/ITGB3), and alpha-4/beta-1 (ITGA4/ITGB1) to appropriate ligands only at concentration higher than 500 nM. Weakly inhibits ADP-induced platelet aggregation. The polypeptide is Disintegrin EMF10B (Eristicophis macmahoni (Leaf-nosed viper)).